A 1530-amino-acid polypeptide reads, in one-letter code: Neurexin-1 (1530 aa).

A signal peptide spans 1–30 (MGTALLQRGGCFLLCLSLLLLGCWAELGSG). One can recognise a Laminin G-like 1 domain in the interval 31-212 (LEFPGAEGQW…KLDDEPPNSG (182 aa)). Topologically, residues 31–1454 (LEFPGAEGQW…EVIRESSSTT (1424 aa)) are extracellular. Residues Asn125 and Asn190 are each glycosylated (N-linked (GlcNAc...) asparagine). The interval 199–221 (SGEVKLDDEPPNSGGGSPCEAGE) is disordered. Positions 213–256 (GGSPCEAGEEGEGGVCLNGGVCSVVDDQAVCDCSRTGFRGKDCS) constitute an EGF-like 1 domain. 2 disulfides stabilise this stretch: Cys228–Cys243 and Cys245–Cys255. Laminin G-like domains are found at residues 299 to 496 (IATF…AFKC) and 503 to 695 (DPIT…KPSC). Asp345, Leu362, and Met430 together coordinate Ca(2+). Disulfide bonds link Cys460/Cys496, Cys666/Cys695, Cys703/Cys714, Cys708/Cys723, and Cys725/Cys735. In terms of domain architecture, EGF-like 2 spans 699-736 (TAKPCLSNPCKNNGMCRDGWNRYVCDCSGTGYLGRSCE). An O-linked (Glc...) serine glycan is attached at Ser705. Laminin G-like domains lie at 741-914 (VLSY…IDYC) and 928-1103 (DPVT…ERGC). Ca(2+) contacts are provided by Asp788 and Leu805. A glycan (N-linked (GlcNAc...) asparagine) is linked at Asn813. Arg864 is a Ca(2+) binding site. 5 disulfides stabilise this stretch: Cys906-Cys914, Cys1075-Cys1103, Cys1110-Cys1121, Cys1115-Cys1130, and Cys1132-Cys1142. The 38-residue stretch at 1106-1143 (PSTTCQEDSCSNQGVCLQQWDGISCDCSMTSFSGPLCN) folds into the EGF-like 3 domain. The Laminin G-like 6 domain maps to 1149–1347 (YIFSKGGGQI…DANIAIVGNV (199 aa)). Ca(2+)-binding residues include Asp1199 and Val1216. Asn1246 carries N-linked (GlcNAc...) asparagine glycosylation. Ca(2+)-binding residues include Ile1298 and Asn1300. O-linked (Xyl...) (heparan sulfate) serine glycosylation occurs at Ser1408. A disordered region spans residues 1411–1443 (CPSDDEDIDPCEPSSGGLANPTRAGGREPYPGS). A helical membrane pass occupies residues 1455-1475 (GMVVGIVAAAALCILILLYAM). Over 1476 to 1530 (YKYRNRDEGSYHVDESRNYISNSAQSNGAVVKEKQPSSAKSANKNKKNKDKEYYV) the chain is Cytoplasmic. The interaction with CASK stretch occupies residues 1497–1523 (NSAQSNGAVVKEKQPSSAKSANKNKKN). Residues 1497–1530 (NSAQSNGAVVKEKQPSSAKSANKNKKNKDKEYYV) form a disordered region.

It belongs to the neurexin family. As to quaternary structure, interacts (via laminin G-like domain 2 and/or laminin G-like domain 6) with NLGN1 forming a heterotetramer, where one NLGN1 dimer interacts with one NRXN1 dimer. Also interacts (via laminin G-like domain 2 and/or laminin G-like domain 6) with NLGN2, NLGN3 and NLGN4L; interactions with NLGN1, NLGN2, NLGN3 and NLGN4L are calcium-dependent. Interacts (via cytoplasmic C-terminal region) with CASK (via the PDZ, SH3 and guanylate kinase-like domains). Interacts (via cytoplasmic C-terminus) with CASKIN1 and APBA1. Interacts (via laminin G-like domain 2) with NXPH1 and NXPH3. Alpha-type isoforms (neurexin-1-alpha) interact (via laminin G-like domain 2 and/or laminin G-like domain 6) with DAG1 (via alpha-dystroglycan chain). Interacts with LRRTM1, LRRTM2, LRRTM3 and LRRTM4. Interacts with SYT13 and SYTL1. Interacts with CBLN1, CBLN2 and, less avidly, with CBLN4. Interacts with CLSTN3. Alpha-type isoforms interact with alpha-latrotoxin from spider venom. In terms of processing, O-glycosylated; contains heparan sulfate. Heparan sulfate attachment is required for synapse development by mediating interactions with neuroligins and LRRTM2.

The protein localises to the presynaptic cell membrane. Cell surface protein involved in cell-cell-interactions, exocytosis of secretory granules and regulation of signal transmission. Function is isoform-specific. Alpha-type isoforms have a long N-terminus with six laminin G-like domains and play an important role in synaptic signal transmission. Alpha-type isoforms play a role in the regulation of calcium channel activity and Ca(2+)-triggered neurotransmitter release at synapses and at neuromuscular junctions. They play an important role in Ca(2+)-triggered exocytosis of secretory granules in pituitary gland. They may affect their functions at synapses and in endocrine cells via their interactions with proteins from the exocytotic machinery. Likewise, alpha-type isoforms play a role in regulating the activity of postsynaptic NMDA receptors, a subtype of glutamate-gated ion channels. Both alpha-type and beta-type isoforms may play a role in the formation or maintenance of synaptic junctions via their interactions (via the extracellular domains) with neuroligin family members, CBLN1 or CBLN2. In vitro, triggers the de novo formation of presynaptic structures. May be involved in specification of excitatory synapses. Alpha-type isoforms were first identified as receptors for alpha-latrotoxin from spider venom. The polypeptide is Neurexin-1 (NRXN1) (Bos taurus (Bovine)).